Consider the following 322-residue polypeptide: tRNA U34 carboxymethyltransferase (322 aa).

Carboxy-S-adenosyl-L-methionine is bound by residues Lys-92, Trp-106, Lys-111, Gly-131, 153 to 155 (DPT), 181 to 182 (VE), Met-196, Tyr-200, and Arg-315.

Belongs to the class I-like SAM-binding methyltransferase superfamily. CmoB family. As to quaternary structure, homotetramer.

It carries out the reaction carboxy-S-adenosyl-L-methionine + 5-hydroxyuridine(34) in tRNA = 5-carboxymethoxyuridine(34) in tRNA + S-adenosyl-L-homocysteine + H(+). Functionally, catalyzes carboxymethyl transfer from carboxy-S-adenosyl-L-methionine (Cx-SAM) to 5-hydroxyuridine (ho5U) to form 5-carboxymethoxyuridine (cmo5U) at position 34 in tRNAs. The polypeptide is tRNA U34 carboxymethyltransferase (Colwellia psychrerythraea (strain 34H / ATCC BAA-681) (Vibrio psychroerythus)).